We begin with the raw amino-acid sequence, 220 residues long: Large ribosomal subunit protein uL3 (220 aa).

The protein belongs to the universal ribosomal protein uL3 family. Part of the 50S ribosomal subunit. Forms a cluster with proteins L14 and L19.

Functionally, one of the primary rRNA binding proteins, it binds directly near the 3'-end of the 23S rRNA, where it nucleates assembly of the 50S subunit. The protein is Large ribosomal subunit protein uL3 of Staphylococcus haemolyticus (strain JCSC1435).